The following is a 732-amino-acid chain: Elongation factor 2 (732 aa).

The tr-type G domain maps to 19–260; sequence ERIRNMGIAA…MVVKHLPNPL (242 aa). GTP is bound by residues 28-35, 94-98, and 148-151; these read AHIDHGKT, DTPGH, and NKVD. H597 bears the Diphthamide mark.

The protein belongs to the TRAFAC class translation factor GTPase superfamily. Classic translation factor GTPase family. EF-G/EF-2 subfamily.

The protein resides in the cytoplasm. In terms of biological role, catalyzes the GTP-dependent ribosomal translocation step during translation elongation. During this step, the ribosome changes from the pre-translocational (PRE) to the post-translocational (POST) state as the newly formed A-site-bound peptidyl-tRNA and P-site-bound deacylated tRNA move to the P and E sites, respectively. Catalyzes the coordinated movement of the two tRNA molecules, the mRNA and conformational changes in the ribosome. This chain is Elongation factor 2, found in Thermococcus kodakarensis (strain ATCC BAA-918 / JCM 12380 / KOD1) (Pyrococcus kodakaraensis (strain KOD1)).